Consider the following 229-residue polypeptide: Heptaprenylglyceryl phosphate synthase (229 aa).

K12 is a binding site for sn-glycerol 1-phosphate. Mg(2+) contacts are provided by D14 and T40. Sn-glycerol 1-phosphate-binding positions include 159 to 164 (YIEYSG), G189, and 209 to 210 (GN).

It belongs to the GGGP/HepGP synthase family. Group I subfamily. As to quaternary structure, homodimer. The cofactor is Mg(2+).

The catalysed reaction is sn-glycerol 1-phosphate + all-trans-heptaprenyl diphosphate = 3-heptaprenyl-sn-glycero-1-phosphate + diphosphate. The protein operates within membrane lipid metabolism; glycerophospholipid metabolism. Its function is as follows. Prenyltransferase that catalyzes in vivo the transfer of the heptaprenyl moiety of heptaprenyl pyrophosphate (HepPP; 35 carbon atoms) to the C3 hydroxyl of sn-glycerol-1-phosphate (G1P), producing heptaprenylglyceryl phosphate (HepGP). This reaction is an ether-bond-formation step in the biosynthesis of archaea-type G1P-based membrane lipids found in Bacillales. In Staphylococcus carnosus (strain TM300), this protein is Heptaprenylglyceryl phosphate synthase.